Here is a 157-residue protein sequence, read N- to C-terminus: Protein Smg homolog (157 aa).

This sequence belongs to the Smg family.

The protein is Protein Smg homolog of Shewanella putrefaciens (strain CN-32 / ATCC BAA-453).